A 315-amino-acid chain; its full sequence is MSDAPTVVAYLGPAGTFTEEALYKFADAGVFGDGEIEQLPAKSPQEAVDAVRHGTAQFAVVAIENFVDGPVTPTFDALDQGSNVQIIAEEELDIAFSIMVRPGTSLADVKTLATHPVGYQQVKNWMATTIPDAMYLSASSNGAGAQMVAEGTADAAAAPSRAAELFGLERLVDDVADVRGARTRFVAVQAQAAVSEPTGHDRTSVIFSLPNVPGSLVRALNEFAIRGVDLTRIESRPTRKVFGTYRFHLDISGHIRDIPVAEALRALHLQAEELVFVGSWPSNRAEDSTPQTDQLAKLHKADEWVRAASEGRKLN.

The 184-residue stretch at 7-190 folds into the Prephenate dehydratase domain; that stretch reads VVAYLGPAGT…ARTRFVAVQA (184 aa). The ACT domain maps to 204 to 283; the sequence is SVIFSLPNVP…LVFVGSWPSN (80 aa).

The enzyme catalyses prephenate + H(+) = 3-phenylpyruvate + CO2 + H2O. It functions in the pathway amino-acid biosynthesis; L-phenylalanine biosynthesis; phenylpyruvate from prephenate: step 1/1. This chain is Prephenate dehydratase (pheA), found in Corynebacterium glutamicum (strain ATCC 13032 / DSM 20300 / JCM 1318 / BCRC 11384 / CCUG 27702 / LMG 3730 / NBRC 12168 / NCIMB 10025 / NRRL B-2784 / 534).